The primary structure comprises 138 residues: Large ribosomal subunit protein uL16 (138 aa).

Basic residues predominate over residues 1-13 (MLQPARRKYRKEQ). The tract at residues 1–21 (MLQPARRKYRKEQKGRNTGIA) is disordered.

The protein belongs to the universal ribosomal protein uL16 family. Part of the 50S ribosomal subunit.

Functionally, binds 23S rRNA and is also seen to make contacts with the A and possibly P site tRNAs. The chain is Large ribosomal subunit protein uL16 from Albidiferax ferrireducens (strain ATCC BAA-621 / DSM 15236 / T118) (Rhodoferax ferrireducens).